Here is a 697-residue protein sequence, read N- to C-terminus: uncharacterized protein (697 aa).

Helical transmembrane passes span 45 to 65 (LCAV…LALL), 86 to 106 (TVAA…MGVV), 128 to 148 (VVVS…GMLA), 198 to 218 (VLLG…WWAL), and 280 to 300 (HLAI…ILAG). ABC transporter domains lie at 251-473 (VRLD…QPQH) and 477-696 (LELV…AGGM). ATP is bound by residues 285–292 (GANGSGKT) and 514–521 (GGNGSGKS). A helical membrane pass occupies residues 522 to 542 (TLAWIMAGLTIPTTGACLLDG).

It belongs to the ABC transporter superfamily.

Its subcellular location is the cell membrane. This is an uncharacterized protein from Mycobacterium tuberculosis (strain CDC 1551 / Oshkosh).